The following is a 170-amino-acid chain: Peptide deformylase 2 (170 aa).

Residues Cys94 and His136 each coordinate Fe cation. Glu137 is an active-site residue. His140 contacts Fe cation.

The protein belongs to the polypeptide deformylase family. It depends on Fe(2+) as a cofactor.

It carries out the reaction N-terminal N-formyl-L-methionyl-[peptide] + H2O = N-terminal L-methionyl-[peptide] + formate. In terms of biological role, removes the formyl group from the N-terminal Met of newly synthesized proteins. Requires at least a dipeptide for an efficient rate of reaction. N-terminal L-methionine is a prerequisite for activity but the enzyme has broad specificity at other positions. This is Peptide deformylase 2 from Xanthomonas axonopodis pv. citri (strain 306).